Consider the following 527-residue polypeptide: Hopanoid C-2 methylase (527 aa).

Residues 36–148 form the B12-binding domain; it reads VAAFMPPQGL…AKLTHDVTRP (113 aa). The Radical SAM core domain occupies 173–408; the sequence is AECSKYLLGS…HDQVVAMWKD (236 aa). The [4Fe-4S] cluster site is built by Cys-189, Cys-193, and Cys-196.

It belongs to the radical SAM superfamily. Requires [4Fe-4S] cluster as cofactor.

In terms of biological role, required for methylation of hopanoids at the C-2 position. The polypeptide is Hopanoid C-2 methylase (Rhodopseudomonas palustris (strain TIE-1)).